Here is a 345-residue protein sequence, read N- to C-terminus: Protein RecA (345 aa).

65–72 (GPESSGKT) lines the ATP pocket.

This sequence belongs to the RecA family.

Its subcellular location is the cytoplasm. Its function is as follows. Can catalyze the hydrolysis of ATP in the presence of single-stranded DNA, the ATP-dependent uptake of single-stranded DNA by duplex DNA, and the ATP-dependent hybridization of homologous single-stranded DNAs. It interacts with LexA causing its activation and leading to its autocatalytic cleavage. The chain is Protein RecA from Campylobacter fetus subsp. fetus (strain 82-40).